Consider the following 786-residue polypeptide: Endonuclease MutS2 (786 aa).

332-339 (GPNTGGKT) lines the ATP pocket. The Smr domain occupies 711–786 (VDLRGMDSIE…GTGVTIVELK (76 aa)).

The protein belongs to the DNA mismatch repair MutS family. MutS2 subfamily. In terms of assembly, homodimer. Binds to stalled ribosomes, contacting rRNA.

In terms of biological role, endonuclease that is involved in the suppression of homologous recombination and thus may have a key role in the control of bacterial genetic diversity. Its function is as follows. Acts as a ribosome collision sensor, splitting the ribosome into its 2 subunits. Detects stalled/collided 70S ribosomes which it binds and splits by an ATP-hydrolysis driven conformational change. Acts upstream of the ribosome quality control system (RQC), a ribosome-associated complex that mediates the extraction of incompletely synthesized nascent chains from stalled ribosomes and their subsequent degradation. Probably generates substrates for RQC. The polypeptide is Endonuclease MutS2 (Clostridium kluyveri (strain NBRC 12016)).